Reading from the N-terminus, the 217-residue chain is Adenylate kinase (217 aa).

Residue 10 to 15 coordinates ATP; the sequence is GAGKGT. The tract at residues 30 to 59 is NMP; the sequence is STGDMLRAAIREGTELGLKAKSVMESGGLV. AMP-binding positions include threonine 31, arginine 36, 57–59, 85–88, and glutamine 92; these read GLV and GFPR. An LID region spans residues 122-159; sequence GRRQHPASGRVYHVVYNPPKVEGKDDETGEDLVQRPDD. ATP contacts are provided by residues arginine 123 and 132 to 133; that span reads VY. 2 residues coordinate AMP: arginine 156 and arginine 167. Residue arginine 202 coordinates ATP.

It belongs to the adenylate kinase family. In terms of assembly, monomer.

It is found in the cytoplasm. It catalyses the reaction AMP + ATP = 2 ADP. Its pathway is purine metabolism; AMP biosynthesis via salvage pathway; AMP from ADP: step 1/1. Functionally, catalyzes the reversible transfer of the terminal phosphate group between ATP and AMP. Plays an important role in cellular energy homeostasis and in adenine nucleotide metabolism. The sequence is that of Adenylate kinase from Acinetobacter baumannii (strain AB307-0294).